We begin with the raw amino-acid sequence, 42 residues long: Statherin (42 aa).

Residues 1 to 6 form a hydroxyapatite-binding; inhibits crystal growth region; it reads DSSEEK. 2 positions are modified to phosphoserine: serine 2 and serine 3. A disordered region spans residues 18–42; the sequence is RYGPYQPFVPPPLYPQPYQPYQPQY. The hydrophobic; inhibits precipitation of calcium phosphate salts stretch occupies residues 18 to 42; sequence RYGPYQPFVPPPLYPQPYQPYQPQY. Residues 24 to 42 show a composition bias toward pro residues; the sequence is PFVPPPLYPQPYQPYQPQY.

Belongs to the histatin/statherin family. Secreted by parotid and submandibular glands.

It localises to the secreted. Its function is as follows. Salivary protein that stabilizes saliva supersaturated with calcium salts by inhibiting the precipitation of calcium phosphate salts. It also modulates hydroxyapatite crystal formation on the tooth surface. The sequence is that of Statherin (STATH) from Macaca arctoides (Stump-tailed macaque).